Consider the following 157-residue polypeptide: MRLPRRVEDAAELRKNLKPLLEKRRRARINESLSQLKGLVLPLLGAETSRSSKLEKADILEMTVRFLQEQPATLYSSAAPGPLNSYLEGYRACLARLARVLPACSVLEPAVSARLLEHLRQRTVSDDSPSLTLPPAPAPAPSPPVPPPGSSGLWRPW.

The region spanning 13–70 (LRKNLKPLLEKRRRARINESLSQLKGLVLPLLGAETSRSSKLEKADILEMTVRFLQEQ) is the bHLH domain. In terms of domain architecture, Orange spans 86–119 (YLEGYRACLARLARVLPACSVLEPAVSARLLEHL). Positions 124-157 (VSDDSPSLTLPPAPAPAPSPPVPPPGSSGLWRPW) are disordered. Residues 132-149 (TLPPAPAPAPSPPVPPPG) are compositionally biased toward pro residues. The short motif at 154–157 (WRPW) is the WRPW motif element.

As to quaternary structure, transcription repression requires formation of a complex with a corepressor protein of the Groucho/TLE family.

The protein resides in the nucleus. Its function is as follows. Transcriptional repressor of genes that require a bHLH protein for their transcription. The protein is Transcription factor HES-2 (Hes2) of Mus musculus (Mouse).